Here is a 235-residue protein sequence, read N- to C-terminus: MGRAFEYRRASKEARWDKMSKLFPKLSKAITVAAKEGGIDPDMNPKLRTAIATAKAQNMPKDNIDAAIKRANGKDSSDIKTIFYDGKAAHGVQIIVETATDNPTRTVANVKSIFSKNGGEMLPSGSLNFMFSRKAIFEVVKPSGDIEELELELIDAGLTDIEENDGTLTIYGDYTSFGTLSEGIEKMGLEVKKGSLQFIPNSTVNLDESAIGELERLLDKLEDDDDVQAVYTNIE.

It belongs to the TACO1 family.

Its subcellular location is the cytoplasm. This Campylobacter fetus subsp. fetus (strain 82-40) protein is Probable transcriptional regulatory protein CFF8240_0424.